The sequence spans 160 residues: MSDRVYLTKDGYNRLRDELTVLKSDVRKEVLEKIAEARAHGDLSENAEYDAAREQQRQLENKIGDLESKLTRATILDPKQVKTDRVYILTSVKLKNLDAQKEEIIEYTLVSSDEADTDLGKISVRSPVGKSLLGKAVGDKVQIQVPKGELHYEILEIFVK.

Positions 43 to 76 (LSENAEYDAAREQQRQLENKIGDLESKLTRATIL) form a coiled coil.

It belongs to the GreA/GreB family.

Necessary for efficient RNA polymerase transcription elongation past template-encoded arresting sites. The arresting sites in DNA have the property of trapping a certain fraction of elongating RNA polymerases that pass through, resulting in locked ternary complexes. Cleavage of the nascent transcript by cleavage factors such as GreA or GreB allows the resumption of elongation from the new 3'terminus. GreA releases sequences of 2 to 3 nucleotides. This is Transcription elongation factor GreA from Chlorobium phaeobacteroides (strain BS1).